Here is a 191-residue protein sequence, read N- to C-terminus: TATA-box-binding protein (191 aa).

2 repeat units span residues 18–94 and 108–185.

This sequence belongs to the TBP family. Belongs to the TFIID complex together with the TBP-associated factors (TAFs). Binds DNA as monomer.

It is found in the nucleus. Functionally, general transcription factor that functions at the core of the DNA-binding multiprotein factor TFIID. Binding of TFIID to the TATA box is the initial transcriptional step of the pre-initiation complex (PIC), playing a role in the activation of eukaryotic genes transcribed by RNA polymerase II. In Acetabularia peniculus (Green alga), this protein is TATA-box-binding protein.